A 281-amino-acid chain; its full sequence is Aminoglycoside N(3)-acetyltransferase IX (281 aa).

This sequence belongs to the antibiotic N-acetyltransferase family.

It carries out the reaction a 2-deoxystreptamine antibiotic + acetyl-CoA = an N(3)-acetyl-2-deoxystreptamine antibiotic + CoA + H(+). Its function is as follows. Resistance to neomycin. The chain is Aminoglycoside N(3)-acetyltransferase IX (aacC9) from Micromonospora chalcea.